We begin with the raw amino-acid sequence, 102 residues long: RNA-binding protein Hfq (102 aa).

In terms of domain architecture, Sm spans 9–68; that stretch reads DPFLNALRRERVPVSIYLVNGIKLQGQIESFDQFVILLKNTVSQMVYKHAISTVVPSRPV. The tract at residues 65–102 is disordered; sequence SRPVSHHSSNTSVGASVGNYHSGGVSAPAAQQESDGTE. The span at 93–102 shows a compositional bias: polar residues; the sequence is AAQQESDGTE.

This sequence belongs to the Hfq family. Homohexamer.

Functionally, RNA chaperone that binds small regulatory RNA (sRNAs) and mRNAs to facilitate mRNA translational regulation in response to envelope stress, environmental stress and changes in metabolite concentrations. Also binds with high specificity to tRNAs. In Photorhabdus laumondii subsp. laumondii (strain DSM 15139 / CIP 105565 / TT01) (Photorhabdus luminescens subsp. laumondii), this protein is RNA-binding protein Hfq.